Here is a 438-residue protein sequence, read N- to C-terminus: Diaminopimelate decarboxylase (438 aa).

Lysine 73 carries the post-translational modification N6-(pyridoxal phosphate)lysine. Pyridoxal 5'-phosphate contacts are provided by residues serine 217, glycine 254, and 294 to 297 (EPGR). Positions 297, 333, and 337 each coordinate substrate. The active-site Proton donor is cysteine 362. Positions 363 and 391 each coordinate substrate. Tyrosine 391 serves as a coordination point for pyridoxal 5'-phosphate.

The protein belongs to the Orn/Lys/Arg decarboxylase class-II family. LysA subfamily. In terms of assembly, homodimer. Pyridoxal 5'-phosphate is required as a cofactor.

It catalyses the reaction meso-2,6-diaminopimelate + H(+) = L-lysine + CO2. Its pathway is amino-acid biosynthesis; L-lysine biosynthesis via DAP pathway; L-lysine from DL-2,6-diaminopimelate: step 1/1. Competitively inhibited by the substrate analog azelaic acid in vitro but not in vivo. Functionally, specifically catalyzes the decarboxylation of meso-diaminopimelate (meso-DAP) to L-lysine. The sequence is that of Diaminopimelate decarboxylase from Methanocaldococcus jannaschii (strain ATCC 43067 / DSM 2661 / JAL-1 / JCM 10045 / NBRC 100440) (Methanococcus jannaschii).